A 131-amino-acid polypeptide reads, in one-letter code: D-ribose pyranase (131 aa).

H20 serves as the catalytic Proton donor. Substrate is bound by residues D28, H98, and 120–122; that span reads FSN.

The protein belongs to the RbsD / FucU family. RbsD subfamily. In terms of assembly, homodecamer.

The protein resides in the cytoplasm. The enzyme catalyses beta-D-ribopyranose = beta-D-ribofuranose. The protein operates within carbohydrate metabolism; D-ribose degradation; D-ribose 5-phosphate from beta-D-ribopyranose: step 1/2. In terms of biological role, catalyzes the interconversion of beta-pyran and beta-furan forms of D-ribose. The sequence is that of D-ribose pyranase from Levilactobacillus brevis (strain ATCC 367 / BCRC 12310 / CIP 105137 / JCM 1170 / LMG 11437 / NCIMB 947 / NCTC 947) (Lactobacillus brevis).